The primary structure comprises 550 residues: Hydroxylamine reductase (550 aa).

[4Fe-4S] cluster is bound by residues Cys7, Cys10, Cys19, and Cys25. The hybrid [4Fe-2O-2S] cluster site is built by His244, Glu268, Cys312, Cys405, Cys433, Cys458, Glu493, and Lys495. Residue Cys405 is modified to Cysteine persulfide.

It belongs to the HCP family. It depends on [4Fe-4S] cluster as a cofactor. Hybrid [4Fe-2O-2S] cluster serves as cofactor.

The protein localises to the cytoplasm. It carries out the reaction A + NH4(+) + H2O = hydroxylamine + AH2 + H(+). Functionally, catalyzes the reduction of hydroxylamine to form NH(3) and H(2)O. The polypeptide is Hydroxylamine reductase (Porphyromonas gingivalis (strain ATCC 33277 / DSM 20709 / CIP 103683 / JCM 12257 / NCTC 11834 / 2561)).